The primary structure comprises 878 residues: uncharacterized protein (878 aa).

4 disordered regions span residues 58 to 223 (IGVD…RTKF), 306 to 494 (KGRL…TSSR), 585 to 652 (KLLE…SGKL), and 679 to 709 (PSSM…GGGG). 3 stretches are compositionally biased toward low complexity: residues 64–213 (NGNS…SGTS), 314–325 (SNSSQSSDSDYS), and 335–355 (IPNS…PNSN). Residues 362–372 (RNPNQLSSTNV) are compositionally biased toward polar residues. The segment covering 373–494 (NNNINNSGGS…TPTTPVTSSR (122 aa)) has biased composition (low complexity). Over residues 585–595 (KLLEQQKEQQQ) the composition is skewed to basic and acidic residues. A compositionally biased stretch (low complexity) spans 596–605 (KEQQQQQKQQ). Residues 615 to 624 (TDDEDEDDDE) show a composition bias toward acidic residues. 2 stretches are compositionally biased toward low complexity: residues 639–652 (NLSN…SGKL) and 679–704 (PSSM…SSSS).

This is an uncharacterized protein from Dictyostelium discoideum (Social amoeba).